The following is a 621-amino-acid chain: Glutathione-regulated potassium-efflux system protein KefC (621 aa).

12 helical membrane-spanning segments follow: residues 4-24, 26-46, 54-74, 90-110, 114-134, 151-171, 178-198, 218-238, 270-290, 294-314, 327-347, and 359-379; these read HTLIQALIYLGAAALIVPVAV, LGLGSVLGYLIAGCIIGPWGF, SILHFAEIGVVLMLFVIGLEL, GALQMIACGALLGGFCILLGM, VAELIGMTLALSSTAIAMQAM, VLLFQDIAAIPLVAMIPLLAV, LGAFALSALKVAGALALVILL, VFSAVALFLVFGFGLLLEEAG, GLLLGLFFIGVGMSVDFGTLV, LRILILLVGFLVIKMGMLWLI, WFAVLLGQGSEFAFVVFGAAQ, and ALTLAVALSMAVTPILLVLLT. An RCK N-terminal domain is found at 399 to 518; sequence QPRVIIAGFG…AGVETPERET (120 aa). The segment at 591–621 is disordered; that stretch reads LSLTQRHGWQGTEEGKHTGDPRDEPESKPTV. Positions 603 to 621 are enriched in basic and acidic residues; sequence EEGKHTGDPRDEPESKPTV.

It belongs to the monovalent cation:proton antiporter 2 (CPA2) transporter (TC 2.A.37) family. KefC subfamily. Homodimer. Interacts with the regulatory subunit KefF.

Its subcellular location is the cell inner membrane. In terms of biological role, pore-forming subunit of a potassium efflux system that confers protection against electrophiles. Catalyzes K(+)/H(+) antiport. This Enterobacter sp. (strain 638) protein is Glutathione-regulated potassium-efflux system protein KefC.